An 85-amino-acid chain; its full sequence is BmK AGP-SYPU2 (85 aa).

A signal peptide spans 1–19 (MNYMVIISLALLVMTGVES). One can recognise an LCN-type CS-alpha/beta domain in the interval 21–83 (KDGYIADDRN…ARIMKPGRCN (63 aa)). 4 disulfide bridges follow: Cys31–Cys82, Cys35–Cys55, Cys41–Cys65, and Cys45–Cys67.

Belongs to the long (4 C-C) scorpion toxin superfamily. Sodium channel inhibitor family. Alpha subfamily. As to expression, expressed by the venom gland.

It is found in the secreted. Alpha toxins bind voltage-independently at site-3 of sodium channels (Nav) and inhibit the inactivation of the activated channels, thereby blocking neuronal transmission. Shows analgesic activity when intraperitoneally injected into mice. In Olivierus martensii (Manchurian scorpion), this protein is BmK AGP-SYPU2.